Here is a 389-residue protein sequence, read N- to C-terminus: Inner membrane transport protein YdhP (389 aa).

The Cytoplasmic segment spans residues 1–6; the sequence is MKINYP. A helical membrane pass occupies residues 7 to 27; that stretch reads LLALAIGAFGIGTTEFSPMGL. Residues 28-43 are Periplasmic-facing; it reads LPVIARGVDVSIPAAG. Residues 44–64 form a helical membrane-spanning segment; it reads MLISAYAVGVMVGAPLMTLLL. At 65 to 70 the chain is on the cytoplasmic side; sequence SHRARR. The helical transmembrane segment at 71–91 threads the bilayer; it reads SALIFLMAIFTLGNVLSAIAP. Topologically, residues 92 to 100 are periplasmic; sequence DYMTLMLSR. The chain crosses the membrane as a helical span at residues 101-121; sequence ILTSLNHGAFFGLGSVVAASV. Residues 122–130 lie on the Cytoplasmic side of the membrane; it reads VPKHKQASA. A helical membrane pass occupies residues 131–151; sequence VATMFMGLTLANIGGVPAATW. Topologically, residues 152–159 are periplasmic; it reads LGETIGWR. A helical transmembrane segment spans residues 160–180; it reads MSFLATAGLGVISMVSLFFSL. The Cytoplasmic segment spans residues 181 to 203; sequence PKGGAGARPEVKKELAVLMRPQV. Residues 204-224 form a helical membrane-spanning segment; it reads LSALLTTVLGAGAMFTLYTYI. At 225–236 the chain is on the periplasmic side; sequence SPVLQSITHATP. Residues 237–257 traverse the membrane as a helical segment; sequence VFVTAMLVLIGVGFSIGNYLG. Residues 258–266 are Cytoplasmic-facing; it reads GKLADRSVN. The chain crosses the membrane as a helical span at residues 267 to 287; that stretch reads GTLKGFLLLLMVIMLAIPFLA. Residues 288 to 290 lie on the Periplasmic side of the membrane; that stretch reads RNK. The helical transmembrane segment at 291 to 311 threads the bilayer; it reads FGAAISMAVWGAATFAVVPPL. The Cytoplasmic segment spans residues 312–330; sequence QMRVMRVASEAPGLSSSVN. The chain crosses the membrane as a helical span at residues 331–351; sequence IGAFNLGNALGAAAGGAVISA. Topologically, residues 352–356 are periplasmic; the sequence is GLGYS. Residues 357–377 traverse the membrane as a helical segment; it reads FVPVMGAIVAGLALLLVFMSA. Over 378–389 the chain is Cytoplasmic; that stretch reads RKQPETVCVANS.

Belongs to the major facilitator superfamily.

The protein localises to the cell inner membrane. This Escherichia coli O157:H7 protein is Inner membrane transport protein YdhP (ydhP).